A 255-amino-acid chain; its full sequence is Putative cysteine-rich repeat secretory protein 13 (255 aa).

Residues methionine 1 to serine 21 form the signal peptide. 2 consecutive Gnk2-homologous domains span residues tyrosine 28–threonine 136 and tyrosine 142–phenylalanine 252.

This sequence belongs to the cysteine-rich repeat secretory protein family.

Its subcellular location is the secreted. This is Putative cysteine-rich repeat secretory protein 13 (CRRSP13) from Arabidopsis thaliana (Mouse-ear cress).